Consider the following 142-residue polypeptide: MRHYETMFILKPTLVEEEIKSKIEFYKEVITKHHGVIETSLDMGMRNLAYEIKKHKRGYYYVAYFKAEPSMILELERLYRINEDVLRFIVIKYESKKEVEAWHALVDRANKKPSHAKEKHEKTEHAHSHHAEEAKSTESHSE.

Residues 110–142 are disordered; it reads NKKPSHAKEKHEKTEHAHSHHAEEAKSTESHSE.

This sequence belongs to the bacterial ribosomal protein bS6 family.

Binds together with bS18 to 16S ribosomal RNA. In Helicobacter pylori (strain G27), this protein is Small ribosomal subunit protein bS6.